Reading from the N-terminus, the 452-residue chain is Phosphoglucosamine mutase (452 aa).

The active-site Phosphoserine intermediate is the serine 103. Mg(2+)-binding residues include serine 103, aspartate 244, aspartate 246, and aspartate 248. Serine 103 bears the Phosphoserine mark.

This sequence belongs to the phosphohexose mutase family. It depends on Mg(2+) as a cofactor. In terms of processing, activated by phosphorylation.

The enzyme catalyses alpha-D-glucosamine 1-phosphate = D-glucosamine 6-phosphate. Functionally, catalyzes the conversion of glucosamine-6-phosphate to glucosamine-1-phosphate. The polypeptide is Phosphoglucosamine mutase (Fusobacterium nucleatum subsp. nucleatum (strain ATCC 25586 / DSM 15643 / BCRC 10681 / CIP 101130 / JCM 8532 / KCTC 2640 / LMG 13131 / VPI 4355)).